We begin with the raw amino-acid sequence, 484 residues long: Sulfoacetaldehyde dehydrogenase (484 aa).

NAD(+) contacts are provided by residues 105-110 (LTPVTN), glycine 188, and glycine 206. The active-site Nucleophile is the cysteine 239. Residues glutamate 332 and leucine 412 each coordinate NAD(+).

It belongs to the aldehyde dehydrogenase family.

It carries out the reaction sulfoacetaldehyde + NAD(+) + CoA = sulfoacetyl-CoA + NADH + H(+). Functionally, part of a variant of the sulfo-TK pathway, a D-sulfoquinovose degradation pathway that produces sulfoacetate. Catalyzes the oxidation of sulfoacetaldehyde (SA) to sulfoacetyl-coenzyme A (sulfoacetyl-CoA). Is highly specific for NAD(+), with only residual (1%) activity with NADP(+). Cannot use acetaldehyde. The sequence is that of Sulfoacetaldehyde dehydrogenase from Acholeplasma sp.